We begin with the raw amino-acid sequence, 84 residues long: uncharacterized protein (84 aa).

This sequence belongs to the csb family.

This is an uncharacterized protein from Dictyostelium discoideum (Social amoeba).